We begin with the raw amino-acid sequence, 396 residues long: Microcin B17-processing protein McbD (396 aa).

The region spanning 41–396 (ASAAGETLKS…VRESKMVPFP (356 aa)) is the YcaO domain.

It localises to the cytoplasm. Functionally, necessary to process the inactive microcin B17 (McbA) precursor into the active peptide. In Escherichia coli, this protein is Microcin B17-processing protein McbD (mcbD).